Here is a 100-residue protein sequence, read N- to C-terminus: UPF0473 protein Lm4b_01511 (100 aa).

Belongs to the UPF0473 family.

The sequence is that of UPF0473 protein Lm4b_01511 from Listeria monocytogenes serotype 4b (strain CLIP80459).